A 234-amino-acid chain; its full sequence is 1-(5-phosphoribosyl)-5-[(5-phosphoribosylamino)methylideneamino] imidazole-4-carboxamide isomerase (234 aa).

The active-site Proton acceptor is Asp9. The active-site Proton donor is Asp131.

The protein belongs to the HisA/HisF family.

Its subcellular location is the cytoplasm. It carries out the reaction 1-(5-phospho-beta-D-ribosyl)-5-[(5-phospho-beta-D-ribosylamino)methylideneamino]imidazole-4-carboxamide = 5-[(5-phospho-1-deoxy-D-ribulos-1-ylimino)methylamino]-1-(5-phospho-beta-D-ribosyl)imidazole-4-carboxamide. The protein operates within amino-acid biosynthesis; L-histidine biosynthesis; L-histidine from 5-phospho-alpha-D-ribose 1-diphosphate: step 4/9. The chain is 1-(5-phosphoribosyl)-5-[(5-phosphoribosylamino)methylideneamino] imidazole-4-carboxamide isomerase from Staphylococcus carnosus (strain TM300).